The following is a 698-amino-acid chain: Polyribonucleotide nucleotidyltransferase (698 aa).

2 residues coordinate Mg(2+): Asp-485 and Asp-491. The region spanning 552–611 is the KH domain; sequence PRIHTIKINTDKIRDVIGKGGAVIRSLCEETGTTIEIEDDGTVKIAATSGEQADDAINRI. The 69-residue stretch at 621–689 folds into the S1 motif domain; it reads GTIYTGKVVR…RQGRVRLSIK (69 aa).

It belongs to the polyribonucleotide nucleotidyltransferase family. Component of the RNA degradosome, which is a multiprotein complex involved in RNA processing and mRNA degradation. Requires Mg(2+) as cofactor.

The protein resides in the cytoplasm. It carries out the reaction RNA(n+1) + phosphate = RNA(n) + a ribonucleoside 5'-diphosphate. Functionally, involved in mRNA degradation. Catalyzes the phosphorolysis of single-stranded polyribonucleotides processively in the 3'- to 5'-direction. The sequence is that of Polyribonucleotide nucleotidyltransferase from Psychromonas ingrahamii (strain DSM 17664 / CCUG 51855 / 37).